We begin with the raw amino-acid sequence, 274 residues long: Copper chaperone for superoxide dismutase (274 aa).

The HMA domain occupies 11-74 (MCALEFTVQM…LLESTGRQAV (64 aa)). Residues Cys-22 and Cys-25 each coordinate Cu cation. A Glycyl lysine isopeptide (Lys-Gly) (interchain with G-Cter in ubiquitin) cross-link involves residue Lys-76. The tract at residues 88–234 (AAVAIMEGSG…LACGIIARSA (147 aa)) is superoxide dismutase-like. A disulfide bridge connects residues Cys-141 and Cys-227. 4 residues coordinate Zn(2+): His-147, His-155, His-164, and Asp-167. Residues Lys-189, Lys-216, and Lys-241 each participate in a glycyl lysine isopeptide (Lys-Gly) (interchain with G-Cter in ubiquitin) cross-link. Cu cation-binding residues include Cys-244 and Cys-246. Ser-267 carries the phosphoserine modification.

It in the C-terminal section; belongs to the Cu-Zn superoxide dismutase family. In terms of assembly, homodimer, and heterodimer with SOD1. Interacts with COMMD1. Interacts with XIAP/BIRC4. Interacts with SLC31A1(via C-terminal domain); this interaction is Cu(1+)-mediated. The heterodimer CCS:SOD1 interacts with SLC31A1; this heterotrimer is Cu(1+)-mediated and its maintenance is regulated through SOD1 activation. Requires Cu(2+) as cofactor. Zn(2+) serves as cofactor. Ubiquitinion by XIAP/BIRC4 leads to enhancement of its chaperone activity toward its physiologic target, SOD1, rather than proteasomal degradation. XIAP/BIRC4 preferentially ubiquitinates at Lys-241.

The protein localises to the cytoplasm. Functionally, delivers copper to copper zinc superoxide dismutase (SOD1). The protein is Copper chaperone for superoxide dismutase of Rattus norvegicus (Rat).